Reading from the N-terminus, the 346-residue chain is Methylthioribose-1-phosphate isomerase (346 aa).

Substrate contacts are provided by residues 46–48 (RGA), Arg-89, and Gln-196. Asp-237 functions as the Proton donor in the catalytic mechanism. Residue 247–248 (NK) coordinates substrate.

The protein belongs to the eIF-2B alpha/beta/delta subunits family. MtnA subfamily.

It carries out the reaction 5-(methylsulfanyl)-alpha-D-ribose 1-phosphate = 5-(methylsulfanyl)-D-ribulose 1-phosphate. It functions in the pathway amino-acid biosynthesis; L-methionine biosynthesis via salvage pathway; L-methionine from S-methyl-5-thio-alpha-D-ribose 1-phosphate: step 1/6. Catalyzes the interconversion of methylthioribose-1-phosphate (MTR-1-P) into methylthioribulose-1-phosphate (MTRu-1-P). The chain is Methylthioribose-1-phosphate isomerase from Geobacter metallireducens (strain ATCC 53774 / DSM 7210 / GS-15).